Consider the following 198-residue polypeptide: Na(+)-translocating NADH-quinone reductase subunit E (198 aa).

6 helical membrane-spanning segments follow: residues 11-31 (SVFI…FLAV), 35-55 (VSTS…AVPV), 77-97 (FLNF…LEMF), 110-130 (GIFL…SFMV), 140-160 (VVYG…LAGL), and 176-196 (LGIT…FSGI).

This sequence belongs to the NqrDE/RnfAE family. Composed of six subunits; NqrA, NqrB, NqrC, NqrD, NqrE and NqrF.

The protein resides in the cell inner membrane. It carries out the reaction a ubiquinone + n Na(+)(in) + NADH + H(+) = a ubiquinol + n Na(+)(out) + NAD(+). Its function is as follows. NQR complex catalyzes the reduction of ubiquinone-1 to ubiquinol by two successive reactions, coupled with the transport of Na(+) ions from the cytoplasm to the periplasm. NqrA to NqrE are probably involved in the second step, the conversion of ubisemiquinone to ubiquinol. The polypeptide is Na(+)-translocating NADH-quinone reductase subunit E (Actinobacillus succinogenes (strain ATCC 55618 / DSM 22257 / CCUG 43843 / 130Z)).